Reading from the N-terminus, the 476-residue chain is Glutamyl-tRNA(Gln) amidotransferase subunit A (476 aa).

Catalysis depends on charge relay system residues lysine 76 and serine 151. The active-site Acyl-ester intermediate is serine 175.

Belongs to the amidase family. GatA subfamily. In terms of assembly, heterotrimer of A, B and C subunits.

It carries out the reaction L-glutamyl-tRNA(Gln) + L-glutamine + ATP + H2O = L-glutaminyl-tRNA(Gln) + L-glutamate + ADP + phosphate + H(+). Its function is as follows. Allows the formation of correctly charged Gln-tRNA(Gln) through the transamidation of misacylated Glu-tRNA(Gln) in organisms which lack glutaminyl-tRNA synthetase. The reaction takes place in the presence of glutamine and ATP through an activated gamma-phospho-Glu-tRNA(Gln). This chain is Glutamyl-tRNA(Gln) amidotransferase subunit A, found in Chlorobium phaeobacteroides (strain DSM 266 / SMG 266 / 2430).